The primary structure comprises 291 residues: 4-diphosphocytidyl-2-C-methyl-D-erythritol kinase (291 aa).

Lysine 12 is an active-site residue. Residue 95-105 (PDGGGLGGGSS) participates in ATP binding. Aspartate 137 is an active-site residue.

The protein belongs to the GHMP kinase family. IspE subfamily.

It carries out the reaction 4-CDP-2-C-methyl-D-erythritol + ATP = 4-CDP-2-C-methyl-D-erythritol 2-phosphate + ADP + H(+). Its pathway is isoprenoid biosynthesis; isopentenyl diphosphate biosynthesis via DXP pathway; isopentenyl diphosphate from 1-deoxy-D-xylulose 5-phosphate: step 3/6. Functionally, catalyzes the phosphorylation of the position 2 hydroxy group of 4-diphosphocytidyl-2C-methyl-D-erythritol. The polypeptide is 4-diphosphocytidyl-2-C-methyl-D-erythritol kinase (Alkalilimnicola ehrlichii (strain ATCC BAA-1101 / DSM 17681 / MLHE-1)).